Here is a 996-residue protein sequence, read N- to C-terminus: Disease resistance protein RGA4 (996 aa).

The structured coiled coil (CC) domain stretch occupies residues 1–176 (MEAALLSGFI…PRIHEADLVG (176 aa)). Residues 111–138 (NLQLAQQLQRLKRMAAEANQRKQRYTAA) adopt a coiled-coil conformation. Residues 180-462 (DREELLEQLA…RWLAEGFVEP (283 aa)) form the NB-ARC domain. 11 LRR repeats span residues 481–503 (RNII…TYGM), 504–528 (MREF…KFVP), 529–549 (KYVR…NFNG), 577–599 (LRVL…ICNL), 600–621 (VLLK…IAKL), 622–644 (KDLE…VFGL), 698–722 (MNKL…DLRE), 759–781 (PCYL…VTSL), 782–804 (RGLK…ALSN), 805–830 (LSYL…GFPR), and 851–874 (LPFL…QIEC).

The protein belongs to the disease resistance NB-LRR family. In terms of assembly, forms homodimer or heterodimer with RGA5 through its coiled coil (CC) domain. As to expression, expressed in leaves.

Its subcellular location is the cytoplasm. Functionally, disease resistance (R) protein. Resistance proteins guard the plant against pathogens that contain an appropriate avirulence protein via an indirect interaction with this avirulence protein. That triggers a defense system including the hypersensitive response, which restricts the pathogen growth. Contribution of RGA5 is required to recognize the effector avirulence proteins AVR-Pia and AVR1-CO39 from M.oryzae. Acts as a constitutively active cell death inducer that is repressed by RGA5. Immune response triggered by the RGA4-RGA5 -mediated recognition of AVR1-CO39 confers resistance to X.oryzae pathovars. This chain is Disease resistance protein RGA4, found in Oryza sativa subsp. japonica (Rice).